Reading from the N-terminus, the 385-residue chain is MDSRARSSSREAHGRSSRSSSRDDKKAKAGRGSRGRARPDAGAERQSTGRTATRGEPRAPAATATVVDVDEVRGPGEEGTEVVALLESERPEEGIKPSGLGACEWLLVLASLIFIIMTFPFSIWFCIKVVQEYERVIIFRLGHLLPGRAKGPGLFFFLPCLDTYHKVDLRLQTLEIPFHEVVTKDMFIMEIDAVCYYRMENASLLLSSLAHVSKAIQFLVQTTMKRLLAHRSLTEILLERKSIAQDVKVALDAVTCIWGIKVERTEIKDVRLPAGLQHSLAVEAEAQRQAKVRVIAAEGEKAASESLRMAAEILSGTPAAVQLRYLHTLQSLSTEKPATVVLPLPFDMLSLLSSPGNRAQGSINYPSSSKPVEPLNPKKKDSPML.

A compositionally biased stretch (basic and acidic residues) spans 1 to 27 (MDSRARSSSREAHGRSSRSSSRDDKKA). The segment at 1–64 (MDSRARSSSR…GEPRAPAATA (64 aa)) is disordered. Over 1-104 (MDSRARSSSR…IKPSGLGACE (104 aa)) the chain is Cytoplasmic. The S-palmitoyl cysteine moiety is linked to residue Cys-103. A helical membrane pass occupies residues 105-125 (WLLVLASLIFIIMTFPFSIWF). At 126 to 385 (CIKVVQEYER…NPKKKDSPML (260 aa)) the chain is on the extracellular side. Positions 357-370 (NRAQGSINYPSSSK) are enriched in polar residues. Residues 357 to 385 (NRAQGSINYPSSSKPVEPLNPKKKDSPML) form a disordered region. Residues 376 to 385 (NPKKKDSPML) are compositionally biased toward basic and acidic residues.

It belongs to the band 7/mec-2 family. As to quaternary structure, interacts with nephrin/NPHS1, KIRRL1 and CD2AP. Interacts with DDN.

The protein resides in the membrane. Plays a role in the regulation of glomerular permeability, acting probably as a linker between the plasma membrane and the cytoskeleton. This is Podocin (Nphs2) from Mus musculus (Mouse).